Consider the following 572-residue polypeptide: E3 SUMO-protein ligase PIAS2 (572 aa).

Residues 11–45 (VSSFRVSELQVLLGFAGRNKSGRKHDLLMRALHLL) enclose the SAP domain. The short motif at 19 to 23 (LQVLL) is the LXXLL motif element. Glycyl lysine isopeptide (Lys-Gly) (interchain with G-Cter in SUMO2) cross-links involve residues Lys-46 and Lys-249. Residues 134–299 (QPSPPIPPVH…SMSVYLVRQL (166 aa)) enclose the PINIT domain. The segment at 331–412 (PDSEIATTSL…FMEILNDCSD (82 aa)) adopts an SP-RING-type zinc-finger fold. Zn(2+)-binding residues include Cys-362, His-364, Cys-385, and Cys-388. Glycyl lysine isopeptide (Lys-Gly) (interchain with G-Cter in SUMO2) cross-links involve residues Lys-430, Lys-435, Lys-443, and Lys-452. Positions 467-473 (IDVIDLT) are SUMO1-binding. Phosphoserine occurs at positions 476, 477, and 478. Positions 484–492 (PPAKRKCIF) match the Nuclear localization signal motif. Lys-489 participates in a covalent cross-link: Glycyl lysine isopeptide (Lys-Gly) (interchain with G-Cter in SUMO2). Phosphoserine is present on Ser-499. A Glycyl lysine isopeptide (Lys-Gly) (interchain with G-Cter in SUMO2) cross-link involves residue Lys-502. A disordered region spans residues 523-572 (AAIPPSLTDYSVPFHHTPVSSMSSDLPGEQRRNDINNEVQLGTSSDTVQQ). Residues 558-572 (NNEVQLGTSSDTVQQ) are compositionally biased toward polar residues.

It belongs to the PIAS family. In terms of assembly, binds SUMO1 and UBE2I. Interacts with AXIN1, JUN, MDM2, PARK7, TP53 and TP73 isoform alpha, but not TP73 isoform beta. Interacts with STAT4 following IL12 and IFN-alpha stimulation of T-cells. Interacts also with GTF2I, GTF2IRD1, IKFZ1, DAB2 and MSX2, as well as with several steroid receptors, including ESR1, ESR2, NR3C1, PGR, AR, and with NCOA2. Sumoylation of a target protein seems to enhance the interaction. Binds to sumoylated ELK1. Binds DNA, such as CDKN1A promoter, in a sequence-specific manner. Interacts with PLAG1. Interacts with KLF8; the interaction results in SUMO ligation and repression of KLF8 transcriptional activity and of its cell cycle progression into G(1) phase. Interacts with IFIH1/MDA5. Interacts with PML. Interacts with PRDM1. In terms of processing, sumoylated. In terms of tissue distribution, mainly expressed in testis.

It is found in the nucleus speckle. Its subcellular location is the nucleus. The protein localises to the PML body. The protein operates within protein modification; protein sumoylation. In terms of biological role, functions as an E3-type small ubiquitin-like modifier (SUMO) ligase, stabilizing the interaction between UBE2I and the substrate, and as a SUMO-tethering factor. Plays a crucial role as a transcriptional coregulation in various cellular pathways, including the STAT pathway, the p53 pathway and the steroid hormone signaling pathway. The effects of this transcriptional coregulation, transactivation or silencing may vary depending upon the biological context and PIAS2 isoform studied. However, it seems to be mostly involved in gene silencing. Binds to sumoylated ELK1 and enhances its transcriptional activity by preventing recruitment of HDAC2 by ELK1, thus reversing SUMO-mediated repression of ELK1 transactivation activity. Sumoylates PML at'Lys-65' and 'Lys-160'. The chain is E3 SUMO-protein ligase PIAS2 (Pias2) from Rattus norvegicus (Rat).